Reading from the N-terminus, the 157-residue chain is Cyclic pyranopterin monophosphate synthase (157 aa).

Substrate is bound by residues 74–76 and 110–111; these read MCH and ME. Residue Asp-125 is part of the active site.

It belongs to the MoaC family. As to quaternary structure, homohexamer; trimer of dimers.

The enzyme catalyses (8S)-3',8-cyclo-7,8-dihydroguanosine 5'-triphosphate = cyclic pyranopterin phosphate + diphosphate. It functions in the pathway cofactor biosynthesis; molybdopterin biosynthesis. In terms of biological role, catalyzes the conversion of (8S)-3',8-cyclo-7,8-dihydroguanosine 5'-triphosphate to cyclic pyranopterin monophosphate (cPMP). In Peptoclostridium acidaminophilum (Eubacterium acidaminophilum), this protein is Cyclic pyranopterin monophosphate synthase.